The following is a 367-amino-acid chain: Cytochrome-c peroxidase IdrP2 (367 aa).

The signal sequence occupies residues 1–28 (MTTHQSIRRLSRIAALVGLAFVAGTVAA). Cytochrome c domains are found at residues 47 to 157 (DMVE…AMWQ) and 200 to 345 (SQQK…EALS). Residues cysteine 69, cysteine 72, histidine 73, cysteine 215, cysteine 218, and histidine 219 each contribute to the heme c site.

As to quaternary structure, the iodate reductase (Idr) complex is composed of a molybdopterin-dependent iodate reductase (IdrA and IdrB subunits) and two associated peroxidases (IdrP1 and IdrP2). Heme c is required as a cofactor.

The protein localises to the periplasm. The catalysed reaction is 2 Fe(II)-[cytochrome c] + H2O2 + 2 H(+) = 2 Fe(III)-[cytochrome c] + 2 H2O. Its function is as follows. Involved in iodate respiration. May play a critical role in detoxification of inadvertent H(2)O(2) generated by the iodate reductase IdrA/IdrB. This chain is Cytochrome-c peroxidase IdrP2, found in Denitromonas iodatirespirans.